The sequence spans 70 residues: MFRLTSVGCILLVIAFLNLVGLTNACTSEGYSCSSDSNCCKNVCCWNVCESHCRHPGKRTRLQGFFKHRR.

The N-terminal stretch at 1–25 (MFRLTSVGCILLVIAFLNLVGLTNA) is a signal peptide. Disulfide bonds link Cys-26–Cys-40, Cys-33–Cys-45, Cys-39–Cys-49, and Cys-44–Cys-53. At Pro-56 the chain carries Proline amide. The propeptide occupies 60-70 (TRLQGFFKHRR).

This sequence belongs to the conotoxin I2 superfamily. As to expression, expressed by the venom duct.

Its subcellular location is the secreted. Its function is as follows. Probable neurotoxin. The polypeptide is Conotoxin Im11.11 (Conus imperialis (Imperial cone)).